A 266-amino-acid chain; its full sequence is Mitochondrial import inner membrane translocase subunit Tim29 (266 aa).

A mitochondrion-targeting transit peptide spans 1–37 (MVTAALKRFWSGGHGEAGGEAGGATTVAVKPGLWTRL). At 38–65 (STWAGALLRDYAEACGDAAAAARARPGR) the chain is on the mitochondrial matrix side. The chain crosses the membrane as a helical span at residues 66-83 (AALYVGLLGGAAACCALA). Topologically, residues 84–266 (PSEAAFEEAL…DSLVQSDVSR (183 aa)) are mitochondrial intermembrane.

In terms of assembly, component of the TIM22 complex, which core is composed of TIMM22, associated with TIMM10 (TIMM10A and/or TIMM10B), TIMM9, AGK and TIMM29. Interacts with TIMM10B; the interaction is direct. Interacts with TOMM40; linking the TIM22 complex to the TOM complex. Interacts with TIMM22 (when oxidized); the interaction is direct.

It is found in the mitochondrion inner membrane. Component of the TIM22 complex, a complex that mediates the import and insertion of multi-pass transmembrane proteins into the mitochondrial inner membrane. The TIM22 complex forms a twin-pore translocase that uses the membrane potential as the external driving force. Required for the stability of the TIM22 complex and functions in the assembly of the TIMM22 protein into the TIM22 complex. May facilitate cooperation between TIM22 and TOM complexes by interacting with TOMM40. The polypeptide is Mitochondrial import inner membrane translocase subunit Tim29 (Timm29) (Mus musculus (Mouse)).